A 715-amino-acid chain; its full sequence is Fatty acid oxidation complex subunit alpha (715 aa).

The enoyl-CoA hydratase/isomerase stretch occupies residues 1-190 (MIYQGKAITV…KVGAVDAVVA (190 aa)). Asp-297 serves as a coordination point for substrate. A 3-hydroxyacyl-CoA dehydrogenase region spans residues 312-715 (HDAKQAAVLG…MAKNGQRFFN (404 aa)). NAD(+) is bound by residues Met-325, Asp-344, 401–403 (VVE), Lys-408, and Ser-430. His-451 functions as the For 3-hydroxyacyl-CoA dehydrogenase activity in the catalytic mechanism. Position 454 (Asn-454) interacts with NAD(+). Asn-501 and Tyr-660 together coordinate substrate.

In the N-terminal section; belongs to the enoyl-CoA hydratase/isomerase family. It in the C-terminal section; belongs to the 3-hydroxyacyl-CoA dehydrogenase family. In terms of assembly, heterotetramer of two alpha chains (FadB) and two beta chains (FadA).

It catalyses the reaction a (3S)-3-hydroxyacyl-CoA + NAD(+) = a 3-oxoacyl-CoA + NADH + H(+). The catalysed reaction is a (3S)-3-hydroxyacyl-CoA = a (2E)-enoyl-CoA + H2O. The enzyme catalyses a 4-saturated-(3S)-3-hydroxyacyl-CoA = a (3E)-enoyl-CoA + H2O. It carries out the reaction (3S)-3-hydroxybutanoyl-CoA = (3R)-3-hydroxybutanoyl-CoA. It catalyses the reaction a (3Z)-enoyl-CoA = a 4-saturated (2E)-enoyl-CoA. The catalysed reaction is a (3E)-enoyl-CoA = a 4-saturated (2E)-enoyl-CoA. The protein operates within lipid metabolism; fatty acid beta-oxidation. Functionally, involved in the aerobic and anaerobic degradation of long-chain fatty acids via beta-oxidation cycle. Catalyzes the formation of 3-oxoacyl-CoA from enoyl-CoA via L-3-hydroxyacyl-CoA. It can also use D-3-hydroxyacyl-CoA and cis-3-enoyl-CoA as substrate. This chain is Fatty acid oxidation complex subunit alpha, found in Ectopseudomonas oleovorans (Pseudomonas oleovorans).